A 44-amino-acid polypeptide reads, in one-letter code: Protein PsbN (44 aa).

Residues 6–26 (FFFTIFLWCLLLSITGYSIYV) form a helical membrane-spanning segment.

It belongs to the PsbN family.

Its subcellular location is the plastid. The protein localises to the chloroplast thylakoid membrane. May play a role in photosystem I and II biogenesis. This chain is Protein PsbN, found in Chlorella vulgaris (Green alga).